The sequence spans 148 residues: Nucleoside diphosphate kinase (148 aa).

ATP-binding residues include K9, F57, R85, T91, R102, and N112. T91 carries the post-translational modification Phosphothreonine. The active-site Pros-phosphohistidine intermediate is the H115. S122 is subject to Phosphoserine.

Belongs to the NDK family. As to quaternary structure, homotetramer. Mg(2+) is required as a cofactor.

It localises to the cytoplasm. The catalysed reaction is a 2'-deoxyribonucleoside 5'-diphosphate + ATP = a 2'-deoxyribonucleoside 5'-triphosphate + ADP. It carries out the reaction a ribonucleoside 5'-diphosphate + ATP = a ribonucleoside 5'-triphosphate + ADP. In terms of biological role, major role in the synthesis of nucleoside triphosphates other than ATP. The ATP gamma phosphate is transferred to the NDP beta phosphate via a ping-pong mechanism, using a phosphorylated active-site intermediate. The polypeptide is Nucleoside diphosphate kinase (Bacillus cereus (strain ATCC 10987 / NRS 248)).